The following is a 318-amino-acid chain: O-glucosyltransferase LpsA (318 aa).

Belongs to the glycosyltransferase 90 family.

It functions in the pathway protein modification; protein glycosylation. Involved in lipopolysaccharide core biosynthesis. This Dichelobacter nodosus (Bacteroides nodosus) protein is O-glucosyltransferase LpsA (lpsA).